Consider the following 423-residue polypeptide: Anthranilate 1,2-dioxygenase large subunit (423 aa).

Residues 53-168 enclose the Rieske domain; the sequence is WNFVALEAEI…VDSYRGLVFA (116 aa). Cysteine 95, histidine 97, cysteine 115, and histidine 118 together coordinate [2Fe-2S] cluster. Fe cation is bound by residues histidine 223, histidine 228, and aspartate 370.

The protein belongs to the bacterial ring-hydroxylating dioxygenase alpha subunit family. As to quaternary structure, part of a multicomponent enzyme system composed of a reductase (AndAa), a ferredoxin (AndAb) and a two-subunit oxygenase component (AndAc and AndAd). The cofactor is Fe cation. Requires [2Fe-2S] cluster as cofactor.

It carries out the reaction anthranilate + NADH + O2 + 3 H(+) = catechol + NH4(+) + CO2 + NAD(+). The catalysed reaction is anthranilate + NADPH + O2 + 3 H(+) = catechol + NH4(+) + CO2 + NADP(+). Its pathway is aromatic compound metabolism; anthranilate degradation via hydroxylation; catechol from anthranilate: step 1/1. Oxygenase component of anthranilate dioxygenase multicomponent enzyme system which catalyzes the incorporation of both atoms of molecular oxygen into anthranilate to form catechol. Can also act on benzoate and salicylate but not on 2-chlorobenzoate or o-toluate. This is Anthranilate 1,2-dioxygenase large subunit from Burkholderia cepacia (Pseudomonas cepacia).